The primary structure comprises 325 residues: Lactonase drp35 (325 aa).

10 residues coordinate Ca(2+): E46, T108, G110, D128, T131, Y133, D136, N183, D234, and S235. D234 (proton donor) is an active-site residue.

It belongs to the SMP-30/CGR1 family. Requires Ca(2+) as cofactor.

The protein localises to the cytoplasm. Functionally, exhibits lactonase activity. Acts in cells with perturbed membrane integrity and is possibly related to the membrane homeostasis. The protein is Lactonase drp35 (drp35) of Staphylococcus epidermidis (strain ATCC 12228 / FDA PCI 1200).